The chain runs to 379 residues: MMKGISSVSQSINYNPYIEFNRPQLQISTVNPNPAQSRFSRPRSLRVLSLSADPSANRNPKSAVDAHAPPLVVVGSANADIYVEIERLPKEGETISAKTGQTLAGGKGANQAACGAKLMYPTYFVGRLGEDAHGKLIAEALGDDGCGVHLDYVRSVNNEPTGHAVVMLQSDGQNSIIIVGGANMKAWPEIMSDDDLEIVRNAGIVLLQREIPDSINIQVAKAVKKAGVPVILDVGGMDTPIPNELLDSIDILSPNETELSRLTGMPTETFEQISQAVAKCHKLGVKQVLVKLGSKGSALFIQGEKPIQQSIIPAAQVVDTTGAGDTFTAAFAVAMVEGKSHEECLRFAAAAASLCVQVKGAIPSMPDRKSVLKLLKFSI.

Substrate contacts are provided by residues 78 to 80 (NAD), 106 to 110 (GKGAN), and E210. Residues N255 and 291 to 296 (KLGSKG) each bind ATP. Positions 319 and 321 each coordinate K(+). 324–325 (GD) lines the ATP pocket. A substrate-binding site is contributed by D325. D325 acts as the Proton acceptor in catalysis. K(+) is bound by residues C355, V358, G360, and S364.

Belongs to the carbohydrate kinase PfkB family. Ribokinase subfamily. As to quaternary structure, homodimer. Mg(2+) serves as cofactor.

It is found in the plastid. The protein resides in the chloroplast stroma. Its subcellular location is the chloroplast nucleoid. It carries out the reaction D-ribose + ATP = D-ribose 5-phosphate + ADP + H(+). The protein operates within carbohydrate metabolism; D-ribose degradation; D-ribose 5-phosphate from beta-D-ribopyranose: step 2/2. With respect to regulation, activated by a monovalent cation that binds near, but not in, the active site. The most likely occupant of the site in vivo is potassium. Ion binding induces a conformational change that may alter substrate affinity. Repressed by calcium, rubidium and sodium. Substrate inhibition is observed in the presence of high ATP concentration (Ki=2.44 mM). In terms of biological role, catalyzes the phosphorylation of ribose at O-5 in a reaction requiring ATP and magnesium. The resulting D-ribose-5-phosphate can then be used either for sythesis of nucleotides, histidine, and tryptophan, or as a component of the pentose phosphate pathway. Can also use xylose and fructose as carbohydrate substrates with a low efficiency. Can use GTP, and, to a lower extent, CTP and UTP as alternative phosphoryl donors. The chain is Ribokinase from Arabidopsis thaliana (Mouse-ear cress).